Consider the following 275-residue polypeptide: NH(3)-dependent NAD(+) synthetase (275 aa).

An ATP-binding site is contributed by 46 to 53 (GISGGQDS). Residue Asp-52 coordinates Mg(2+). Arg-140 contributes to the deamido-NAD(+) binding site. Thr-160 is a binding site for ATP. Glu-165 is a binding site for Mg(2+). 2 residues coordinate deamido-NAD(+): Lys-173 and Asp-180. Positions 189 and 211 each coordinate ATP. Position 260 to 261 (260 to 261 (HK)) interacts with deamido-NAD(+).

Belongs to the NAD synthetase family. In terms of assembly, homodimer.

The catalysed reaction is deamido-NAD(+) + NH4(+) + ATP = AMP + diphosphate + NAD(+) + H(+). It functions in the pathway cofactor biosynthesis; NAD(+) biosynthesis; NAD(+) from deamido-NAD(+) (ammonia route): step 1/1. Its function is as follows. Catalyzes the ATP-dependent amidation of deamido-NAD to form NAD. Uses ammonia as a nitrogen source. This is NH(3)-dependent NAD(+) synthetase from Escherichia coli O8 (strain IAI1).